We begin with the raw amino-acid sequence, 206 residues long: RNA pyrophosphohydrolase (206 aa).

The Nudix hydrolase domain occupies 6-149; it reads GYRPNVGIVL…KRGVYARALR (144 aa). A Nudix box motif is present at residues 38 to 59; sequence GGMNTDETPVEAMYRELQEETG. The disordered stretch occupies residues 175 to 206; it reads MPGHTAGHDRPRKRPRTRGYWPKKATGDGPAS.

Belongs to the Nudix hydrolase family. RppH subfamily. The cofactor is a divalent metal cation.

Its function is as follows. Accelerates the degradation of transcripts by removing pyrophosphate from the 5'-end of triphosphorylated RNA, leading to a more labile monophosphorylated state that can stimulate subsequent ribonuclease cleavage. This is RNA pyrophosphohydrolase from Stenotrophomonas maltophilia (strain K279a).